Here is a 477-residue protein sequence, read N- to C-terminus: MLLLELKKINQTLETIHFIGIGGVGMSGIAEILHNLGYKVQGSDLVENYNTKRLESYGIKIFLGHVPQNITNVSYVVISSAINPDNPEIQEALERKIPIIRRAEMLAELMRLKCSVAVSGSHGKTTTTSLVACLFEAAGLCPTVINGGIINNRSTNAYLGSSNYLIAEADESDATFIHIPSTIAIITNIDPEHLDYYKDFATLISAFRSFIINLPFYGFAVCCIDHKIVRKLVDDITERKIVTYGIDSADAHIIAFNINTDIASSTFDVKISLPNVLGTTIIEKITIPIPGRHNILNSLAAIAVGIELDFGIKAIKNGFNNFKGVKRRFTKVAEYNMASIIDDYAHHPEEIKATLATAKNIANKQNGKVIAIFQPHRYSRMQHLFDDFMLCFADADILYITDIYAAGENPIEGITGQSLVDKITKNKYHDQANFLATLDDAVGVIIDNAVSGDVIIMMGAGNISSFANELPKKFGNL.

Residue 120-126 (GSHGKTT) participates in ATP binding.

Belongs to the MurCDEF family.

Its subcellular location is the cytoplasm. It catalyses the reaction UDP-N-acetyl-alpha-D-muramate + L-alanine + ATP = UDP-N-acetyl-alpha-D-muramoyl-L-alanine + ADP + phosphate + H(+). Its pathway is cell wall biogenesis; peptidoglycan biosynthesis. Its function is as follows. Cell wall formation. The chain is UDP-N-acetylmuramate--L-alanine ligase from Rickettsia canadensis (strain McKiel).